A 356-amino-acid polypeptide reads, in one-letter code: D-alanine--D-alanine ligase (356 aa).

Residues 134 to 339 (KQLFATRGLP…YSELITDLIN (206 aa)) form the ATP-grasp domain. ATP is bound at residue 167–222 (EGKLTYPVFVKPANLGSSVGISKCTDSETLIHGIEEALQFDRKLVIEQGVNAREVE). Positions 293, 306, and 308 each coordinate Mg(2+).

This sequence belongs to the D-alanine--D-alanine ligase family. Mg(2+) serves as cofactor. The cofactor is Mn(2+).

It localises to the cytoplasm. It catalyses the reaction 2 D-alanine + ATP = D-alanyl-D-alanine + ADP + phosphate + H(+). It participates in cell wall biogenesis; peptidoglycan biosynthesis. Its function is as follows. Cell wall formation. This is D-alanine--D-alanine ligase from Macrococcus caseolyticus (strain JCSC5402) (Macrococcoides caseolyticum).